A 309-amino-acid polypeptide reads, in one-letter code: tRNA pseudouridine synthase B (309 aa).

Asp39 acts as the Nucleophile in catalysis.

The protein belongs to the pseudouridine synthase TruB family. Type 1 subfamily.

The enzyme catalyses uridine(55) in tRNA = pseudouridine(55) in tRNA. In terms of biological role, responsible for synthesis of pseudouridine from uracil-55 in the psi GC loop of transfer RNAs. The protein is tRNA pseudouridine synthase B of Bacillus pumilus (strain SAFR-032).